The sequence spans 156 residues: Small ribosomal subunit protein uS7 (156 aa).

This sequence belongs to the universal ribosomal protein uS7 family. Part of the 30S ribosomal subunit. Contacts proteins S9 and S11.

Its function is as follows. One of the primary rRNA binding proteins, it binds directly to 16S rRNA where it nucleates assembly of the head domain of the 30S subunit. Is located at the subunit interface close to the decoding center, probably blocks exit of the E-site tRNA. The chain is Small ribosomal subunit protein uS7 from Paenarthrobacter aurescens (strain TC1).